A 99-amino-acid polypeptide reads, in one-letter code: NADH-quinone oxidoreductase subunit K (99 aa).

Transmembrane regions (helical) follow at residues 3–23 (VTAYVVLSGILFTIGCVGVLI), 28–48 (IVVFMCVELMLNASNLALVAF), and 59–79 (IAAFFVMVVAAAEVVVGLAII).

Belongs to the complex I subunit 4L family. In terms of assembly, NDH-1 is composed of 14 different subunits. Subunits NuoA, H, J, K, L, M, N constitute the membrane sector of the complex.

Its subcellular location is the cell membrane. It catalyses the reaction a quinone + NADH + 5 H(+)(in) = a quinol + NAD(+) + 4 H(+)(out). Functionally, NDH-1 shuttles electrons from NADH, via FMN and iron-sulfur (Fe-S) centers, to quinones in the respiratory chain. The immediate electron acceptor for the enzyme in this species is believed to be a menaquinone. Couples the redox reaction to proton translocation (for every two electrons transferred, four hydrogen ions are translocated across the cytoplasmic membrane), and thus conserves the redox energy in a proton gradient. The polypeptide is NADH-quinone oxidoreductase subunit K (Nocardioides sp. (strain ATCC BAA-499 / JS614)).